Here is a 120-residue protein sequence, read N- to C-terminus: Large ribosomal subunit protein uL18 (120 aa).

Residues 1–29 (MITKPNKNAGRKKRHAHVRRTLSGTPQRP) form a disordered region. A compositionally biased stretch (basic residues) spans 9 to 20 (AGRKKRHAHVRR).

This sequence belongs to the universal ribosomal protein uL18 family. Part of the 50S ribosomal subunit; part of the 5S rRNA/L5/L18/L25 subcomplex. Contacts the 5S and 23S rRNAs.

Its function is as follows. This is one of the proteins that bind and probably mediate the attachment of the 5S RNA into the large ribosomal subunit, where it forms part of the central protuberance. This chain is Large ribosomal subunit protein uL18, found in Shouchella clausii (strain KSM-K16) (Alkalihalobacillus clausii).